The following is a 296-amino-acid chain: Nucleotide-binding protein RSc0403 (296 aa).

ATP is bound at residue G8–S15. D57 to S60 serves as a coordination point for GTP. Positions T99–P124 are disordered.

This sequence belongs to the RapZ-like family.

Displays ATPase and GTPase activities. This chain is Nucleotide-binding protein RSc0403, found in Ralstonia nicotianae (strain ATCC BAA-1114 / GMI1000) (Ralstonia solanacearum).